Reading from the N-terminus, the 387-residue chain is Protein kinase ORF16 (387 aa).

Residues 82–381 enclose the Protein kinase domain; sequence KKILSRVGPE…VTLMTELSLL (300 aa). Residue K122 coordinates ATP. D226 serves as the catalytic Proton acceptor.

Belongs to the protein kinase superfamily. Ser/Thr protein kinase family.

The enzyme catalyses L-seryl-[protein] + ATP = O-phospho-L-seryl-[protein] + ADP + H(+). It catalyses the reaction L-threonyl-[protein] + ATP = O-phospho-L-threonyl-[protein] + ADP + H(+). The sequence is that of Protein kinase ORF16 (ORF16) from Ictalurid herpesvirus 1 (strain Auburn) (IcHV-1).